Here is a 287-residue protein sequence, read N- to C-terminus: Elongation factor Ts (287 aa).

Positions 80–83 (TDFL) are involved in Mg(2+) ion dislocation from EF-Tu.

The protein belongs to the EF-Ts family.

The protein localises to the cytoplasm. Functionally, associates with the EF-Tu.GDP complex and induces the exchange of GDP to GTP. It remains bound to the aminoacyl-tRNA.EF-Tu.GTP complex up to the GTP hydrolysis stage on the ribosome. The polypeptide is Elongation factor Ts (Pseudomonas putida (strain ATCC 47054 / DSM 6125 / CFBP 8728 / NCIMB 11950 / KT2440)).